The following is a 250-amino-acid chain: ATP synthase subunit b 2 (250 aa).

The helical transmembrane segment at 2–22 (LIDWFTVFAQILNFVILLGLL) threads the bilayer.

Belongs to the ATPase B chain family. In terms of assembly, F-type ATPases have 2 components, F(1) - the catalytic core - and F(0) - the membrane proton channel. F(1) has five subunits: alpha(3), beta(3), gamma(1), delta(1), epsilon(1). F(0) has four main subunits: a(1), b(1), b'(1) and c(10-14). The alpha and beta chains form an alternating ring which encloses part of the gamma chain. F(1) is attached to F(0) by a central stalk formed by the gamma and epsilon chains, while a peripheral stalk is formed by the delta, b and b' chains.

It is found in the cellular thylakoid membrane. Its function is as follows. F(1)F(0) ATP synthase produces ATP from ADP in the presence of a proton or sodium gradient. F-type ATPases consist of two structural domains, F(1) containing the extramembraneous catalytic core and F(0) containing the membrane proton channel, linked together by a central stalk and a peripheral stalk. During catalysis, ATP synthesis in the catalytic domain of F(1) is coupled via a rotary mechanism of the central stalk subunits to proton translocation. In terms of biological role, component of the F(0) channel, it forms part of the peripheral stalk, linking F(1) to F(0). The protein is ATP synthase subunit b 2 of Picosynechococcus sp. (strain ATCC 27264 / PCC 7002 / PR-6) (Agmenellum quadruplicatum).